The following is a 184-amino-acid chain: Der GTPase-activating protein YihI (184 aa).

Residues 1–107 (MNRPVKGAAD…VVAAKPTMSP (107 aa)) are disordered. The span at 21-32 (TREELEREARER) shows a compositional bias: basic and acidic residues. Positions 80 to 95 (SAVAKPKPKSKPSAPV) are enriched in low complexity.

This sequence belongs to the YihI family. As to quaternary structure, interacts with Der.

Functionally, a GTPase-activating protein (GAP) that modifies Der/EngA GTPase function. May play a role in ribosome biogenesis. The polypeptide is Der GTPase-activating protein YihI (Pectobacterium carotovorum subsp. carotovorum (strain PC1)).